Consider the following 95-residue polypeptide: Putative regulatory protein Daud_1598 (95 aa).

This sequence belongs to the RemA family.

This is Putative regulatory protein Daud_1598 from Desulforudis audaxviator (strain MP104C).